Reading from the N-terminus, the 874-residue chain is Probable RNA-directed RNA polymerase (874 aa).

This sequence belongs to the totiviridae RNA-directed RNA polymerase family.

It catalyses the reaction RNA(n) + a ribonucleoside 5'-triphosphate = RNA(n+1) + diphosphate. RNA-dependent RNA polymerase which replicates the viral genome. Catalyzes the transcription of fully conservative plus-strand genomic RNAs that are extruded from the virion into the cytoplasm where they function as mRNAs for translation of viral proteins and also as substrates for encapsidation to form new virions. Once encapsidated, the positive strand is converted to dsRNA by the RNA-directed RNA polymerase. Displays ssRNA-binding activity. The protein is Probable RNA-directed RNA polymerase (ORF3) of Leishmania major (LRV-1-1).